A 121-amino-acid chain; its full sequence is uncharacterized protein (121 aa).

Residues 65–84 form a helical membrane-spanning segment; sequence TILFYTPTLICFLFLQNFLY.

Its subcellular location is the membrane. This is an uncharacterized protein from Saccharomyces cerevisiae (strain ATCC 204508 / S288c) (Baker's yeast).